Here is a 617-residue protein sequence, read N- to C-terminus: RNA polymerase sigma factor RpoD (617 aa).

The tract at residues 192–222 (NITNDSNENEDENEDENEDEDENSIDPELAN) is disordered. A compositionally biased stretch (acidic residues) spans 198 to 216 (NENEDENEDENEDEDENSI). Residues 383–453 (MVEANLRLVI…TRSIADQART (71 aa)) form a sigma-70 factor domain-2 region. Residues 407 to 410 (DLIQ) carry the Interaction with polymerase core subunit RpoC motif. Residues 462 to 538 (ETINKLNRIS…DTTLELPLDS (77 aa)) form a sigma-70 factor domain-3 region. The tract at residues 551–604 (VLSGLTAREAKVLRMRFGIDMNTDHTLEEVGKQFDVTRERIRQIEAKALRKLRH) is sigma-70 factor domain-4. The H-T-H motif DNA-binding region spans 577 to 596 (LEEVGKQFDVTRERIRQIEA).

This sequence belongs to the sigma-70 factor family. RpoD/SigA subfamily. Interacts transiently with the RNA polymerase catalytic core.

It localises to the cytoplasm. Sigma factors are initiation factors that promote the attachment of RNA polymerase to specific initiation sites and are then released. This sigma factor is the primary sigma factor during exponential growth. The chain is RNA polymerase sigma factor RpoD from Buchnera aphidicola subsp. Schizaphis graminum (strain Sg).